The following is a 307-amino-acid chain: Protease HtpX homolog (307 aa).

The chain crosses the membrane as a helical span at residues 16–36 (LFMGVGYLIGGAAGAMIALVV). Residue His130 coordinates Zn(2+). Glu131 is an active-site residue. His134 provides a ligand contact to Zn(2+). Helical transmembrane passes span 145–165 (ITAT…FFGG) and 172–192 (GPGI…AMLV). Residue Glu201 participates in Zn(2+) binding. The segment at 278 to 307 (AGQSGSATPDPAPAPRGPWNGGAPRRGPWG) is disordered.

This sequence belongs to the peptidase M48B family. Requires Zn(2+) as cofactor.

It is found in the cell inner membrane. This chain is Protease HtpX homolog, found in Nitrobacter hamburgensis (strain DSM 10229 / NCIMB 13809 / X14).